A 235-amino-acid polypeptide reads, in one-letter code: UDP-2,3-diacylglucosamine hydrolase (235 aa).

Positions 9, 11, 42, 80, and 115 each coordinate Mn(2+). 80-81 is a substrate binding site; that stretch reads NR. Asp-123, Ser-161, Lys-165, Lys-168, and His-196 together coordinate substrate. Mn(2+)-binding residues include His-196 and His-198.

This sequence belongs to the LpxH family. Mn(2+) is required as a cofactor.

The protein resides in the cell inner membrane. The enzyme catalyses UDP-2-N,3-O-bis[(3R)-3-hydroxytetradecanoyl]-alpha-D-glucosamine + H2O = 2-N,3-O-bis[(3R)-3-hydroxytetradecanoyl]-alpha-D-glucosaminyl 1-phosphate + UMP + 2 H(+). It functions in the pathway glycolipid biosynthesis; lipid IV(A) biosynthesis; lipid IV(A) from (3R)-3-hydroxytetradecanoyl-[acyl-carrier-protein] and UDP-N-acetyl-alpha-D-glucosamine: step 4/6. Hydrolyzes the pyrophosphate bond of UDP-2,3-diacylglucosamine to yield 2,3-diacylglucosamine 1-phosphate (lipid X) and UMP by catalyzing the attack of water at the alpha-P atom. Involved in the biosynthesis of lipid A, a phosphorylated glycolipid that anchors the lipopolysaccharide to the outer membrane of the cell. The chain is UDP-2,3-diacylglucosamine hydrolase from Actinobacillus succinogenes (strain ATCC 55618 / DSM 22257 / CCUG 43843 / 130Z).